We begin with the raw amino-acid sequence, 396 residues long: tRNA-specific 2-thiouridylase MnmA (396 aa).

ATP-binding positions include 11 to 18 (GLSGGVDS) and Met-37. Residues 97–99 (NPD) form an interaction with target base in tRNA region. Cys-102 serves as the catalytic Nucleophile. An intrachain disulfide couples Cys-102 to Cys-225. Gly-126 is a binding site for ATP. The interval 175–177 (KDQ) is interaction with tRNA. Cys-225 acts as the Cysteine persulfide intermediate in catalysis. Residues 343-344 (RY) are interaction with tRNA.

The protein belongs to the MnmA/TRMU family.

It localises to the cytoplasm. The catalysed reaction is S-sulfanyl-L-cysteinyl-[protein] + uridine(34) in tRNA + AH2 + ATP = 2-thiouridine(34) in tRNA + L-cysteinyl-[protein] + A + AMP + diphosphate + H(+). Catalyzes the 2-thiolation of uridine at the wobble position (U34) of tRNA, leading to the formation of s(2)U34. The protein is tRNA-specific 2-thiouridylase MnmA of Methylibium petroleiphilum (strain ATCC BAA-1232 / LMG 22953 / PM1).